The following is a 294-amino-acid chain: Undecaprenyl-diphosphatase (294 aa).

6 helical membrane-spanning segments follow: residues 39-59 (PGAA…ILYF), 93-113 (ATLG…GFTL), 123-143 (NLWI…VVDA), 198-218 (SFLM…VKAV), 232-252 (PTLV…IGFL), and 268-288 (IGLA…AIDP).

Belongs to the UppP family.

The protein localises to the cell membrane. The enzyme catalyses di-trans,octa-cis-undecaprenyl diphosphate + H2O = di-trans,octa-cis-undecaprenyl phosphate + phosphate + H(+). In terms of biological role, catalyzes the dephosphorylation of undecaprenyl diphosphate (UPP). Confers resistance to bacitracin. The sequence is that of Undecaprenyl-diphosphatase from Bifidobacterium longum subsp. infantis (strain ATCC 15697 / DSM 20088 / JCM 1222 / NCTC 11817 / S12).